The primary structure comprises 269 residues: Cell cycle regulator CcrZ (269 aa).

ATP is bound by residues phenylalanine 39, histidine 76, tryptophan 77, methionine 78, and glycine 80. A Brenner's motif [HXDhX3N] motif is present at residues histidine 164–asparagine 171. The Proton acceptor role is filled by aspartate 166. The short motif at leucine 180 to histidine 203 is the APH element.

The protein belongs to the aminoglycoside phosphotransferase family. In terms of assembly, monomer in solution. Interacts with DnaA (via domains I (1-82) and III (111-326)). Interacts with DnaB. Interacts with FtsZ.

It localises to the cytoplasm. It catalyses the reaction D-ribose + ATP = D-ribose 5-phosphate + ADP + H(+). It carries out the reaction 2-deoxy-D-ribose + ATP = 2-deoxy-D-ribose 5-phosphate + ADP + H(+). Activated by D-ribose and 2-deoxy-D-ribose. Slightly activated by kanamycin and gentamicin. Plays a role in cell cycle regulation and chromosome integrity. Activates DnaA-dependent chromosomal DNA replication initiation ensuring that the chromosome is replicated at the right time during the cell cycle. May regulate replication initiation through phosphorylation of a possible second messenger or metabolite, and by interacting with replication initiation proteins. Has ATPase activity with D-ribose and 2-deoxy-D-ribose in vitro, but not with choline. Involved in DNA damage response. The polypeptide is Cell cycle regulator CcrZ (Bacillus subtilis (strain 168)).